The chain runs to 237 residues: Peroxisomal membrane protein 11-1 (237 aa).

The Cytoplasmic portion of the chain corresponds to 1-92 (MSTLDATRAE…TLVLLGKSKN (92 aa)). A helical transmembrane segment spans residues 93–113 (ALLSTFLFLDQFVWLGRTGIY). At 114 to 204 (KNKERTDRIV…VGLLQLSPKK (91 aa)) the chain is on the lumenal side. A helical membrane pass occupies residues 205 to 223 (ITPRVTGAFGFVTSLISCY). Residues 224-237 (QQLPSRAPAIKVKA) lie on the Cytoplasmic side of the membrane.

Belongs to the peroxin-11 family. Expressed in seedlings, leaf sheaths, flag leaf, panicles and spikelets.

It localises to the peroxisome membrane. In terms of biological role, involved in peroxisomal proliferation. The polypeptide is Peroxisomal membrane protein 11-1 (PEX11-1) (Oryza sativa subsp. japonica (Rice)).